The sequence spans 330 residues: MDGPMRPRSASLVDFQFGVVATETIEDALLHLAQQNEQAVREASGRLGRFREPQIVEFVFLLSEQWCLEKSVSYQAVEILERFMVKQAENICRQATIQPRDNKRESQNWRALKQQLVNKFTLRLVSCVQLASKLSFRNKIISNITVLNFLQALGYLHTKEELLESELDVLKSLNFRINLPTPLAYVETLLEVLGYNGCLVPAMRLHATCLTLLDLVYLLHEPIYESLLRASIENSTPSQLQGEKFTSVKEDFMLLAVGIIAASAFIQNHECWSQVVGHLQSITGIALASIAEFSYAILTHGVGANTPGRQQSIPPHLAARALKTVASSNT.

Positions 27–178 constitute a Cyclin N-terminal domain; it reads DALLHLAQQN…VLKSLNFRIN (152 aa).

As to quaternary structure, interacts with PRR19; this interaction promotes crossover formation. Interacts with RFC3 and RFC4; these interactions facilitate crossover formation. Interacts with CDC34; this interaction regulates the cell-cycle progression.

It is found in the nucleus. Its subcellular location is the cytoplasm. The protein localises to the chromosome. Plays a role in the different steps of crossover formation during meiotic recombination. Participates in the crossover differentiation step of crossover-specific recombination intermediates through its interaction with PRR19. In addition, stimulates crossover formation through the interactions with RFC3 and RFC4 and simultaneously regulates cell-cycle progression through interactions with CDC34 and subsequent ubiquitination of WEE1. May also participates in an active deselection process that destabilizes or removes excess pre-CO intermediates. In Homo sapiens (Human), this protein is Cyclin N-terminal domain-containing protein 1.